The sequence spans 370 residues: 3-dehydroquinate synthase (370 aa).

NAD(+) contacts are provided by residues 112 to 116, 136 to 137, K149, K158, and 176 to 179; these read GVIGD, TT, and TLAT. Residues E191, H254, and H276 each coordinate Zn(2+).

This sequence belongs to the sugar phosphate cyclases superfamily. Dehydroquinate synthase family. It depends on Co(2+) as a cofactor. Zn(2+) serves as cofactor. NAD(+) is required as a cofactor.

It localises to the cytoplasm. It catalyses the reaction 7-phospho-2-dehydro-3-deoxy-D-arabino-heptonate = 3-dehydroquinate + phosphate. The protein operates within metabolic intermediate biosynthesis; chorismate biosynthesis; chorismate from D-erythrose 4-phosphate and phosphoenolpyruvate: step 2/7. Functionally, catalyzes the conversion of 3-deoxy-D-arabino-heptulosonate 7-phosphate (DAHP) to dehydroquinate (DHQ). This is 3-dehydroquinate synthase from Xylella fastidiosa (strain M23).